The chain runs to 167 residues: Ribonuclease H (167 aa).

The 143-residue stretch at 1–143 folds into the RNase H type-1 domain; sequence MYKQIEIFTD…CDQLARKAAK (143 aa). Asp10, Glu48, Asp70, and Asp135 together coordinate Mg(2+).

Belongs to the RNase H family. As to quaternary structure, monomer. Mg(2+) serves as cofactor.

The protein resides in the cytoplasm. It carries out the reaction Endonucleolytic cleavage to 5'-phosphomonoester.. Endonuclease that specifically degrades the RNA of RNA-DNA hybrids. This chain is Ribonuclease H, found in Blochmanniella floridana.